Here is a 192-residue protein sequence, read N- to C-terminus: Large ribosomal subunit protein uL6 (192 aa).

It belongs to the universal ribosomal protein uL6 family. In terms of assembly, part of the 50S ribosomal subunit.

This protein binds to the 23S rRNA, and is important in its secondary structure. It is located near the subunit interface in the base of the L7/L12 stalk, and near the tRNA binding site of the peptidyltransferase center. This Nanoarchaeum equitans (strain Kin4-M) protein is Large ribosomal subunit protein uL6.